The sequence spans 475 residues: DNA-binding protein D-ETS-6 (475 aa).

The tract at residues 42–150 (SIGSGNETKL…VSPVEVPVDP (109 aa)) is disordered. Residues 70-108 (SSSSTSDSSASSYSSTDSDSGSSTSSSSIRSQLPALNLP) are compositionally biased toward low complexity. The segment covering 109-121 (VPLPLATPTPPAV) has biased composition (pro residues). Over residues 122–144 (SSPHQAPSPRRNSSDSNRSVSPV) the composition is skewed to low complexity. The PNT domain occupies 132–219 (RNSSDSNRSV…QHFAISLYHA (88 aa)). Positions 255-335 (IQLWQFLLEL…HGKRYAYKFD (81 aa)) form a DNA-binding region, ETS. Residues 350–475 (GDPASSMLGS…PVTPTTNAFN (126 aa)) are disordered. Residues 375-388 (PPLHHHPQHSHPHH) show a composition bias toward basic residues. Residues 401–436 (SSPASNSSSLGFPSSSTASSQASPGQAPASSSASTS) are compositionally biased toward low complexity. A compositionally biased stretch (polar residues) spans 453-475 (RTSTSSAGNYDQGPVTPTTNAFN).

The protein belongs to the ETS family. As to expression, embryonic ventral nervous system and 1 pair of neurons in each thoracic segment.

It is found in the nucleus. The polypeptide is DNA-binding protein D-ETS-6 (Ets21C) (Drosophila melanogaster (Fruit fly)).